A 521-amino-acid polypeptide reads, in one-letter code: Bifunctional purine biosynthesis protein PurH (521 aa).

The 147-residue stretch at 1-147 (MAKITRALIS…KNNADVTVVV (147 aa)) folds into the MGS-like domain.

It belongs to the PurH family.

It carries out the reaction (6R)-10-formyltetrahydrofolate + 5-amino-1-(5-phospho-beta-D-ribosyl)imidazole-4-carboxamide = 5-formamido-1-(5-phospho-D-ribosyl)imidazole-4-carboxamide + (6S)-5,6,7,8-tetrahydrofolate. The catalysed reaction is IMP + H2O = 5-formamido-1-(5-phospho-D-ribosyl)imidazole-4-carboxamide. It functions in the pathway purine metabolism; IMP biosynthesis via de novo pathway; 5-formamido-1-(5-phospho-D-ribosyl)imidazole-4-carboxamide from 5-amino-1-(5-phospho-D-ribosyl)imidazole-4-carboxamide (10-formyl THF route): step 1/1. It participates in purine metabolism; IMP biosynthesis via de novo pathway; IMP from 5-formamido-1-(5-phospho-D-ribosyl)imidazole-4-carboxamide: step 1/1. The sequence is that of Bifunctional purine biosynthesis protein PurH from Geobacter metallireducens (strain ATCC 53774 / DSM 7210 / GS-15).